Consider the following 348-residue polypeptide: Ileal sodium/bile acid cotransporter (348 aa).

Residues 1 to 28 lie on the Extracellular side of the membrane; that stretch reads MDNSSICNPNATICEGDSCIAPESNFNA. Asparagine 3 and asparagine 10 each carry an N-linked (GlcNAc...) asparagine glycan. A helical membrane pass occupies residues 29–49; sequence ILSVVMSTVLTILLALVMFSM. The Cytoplasmic portion of the chain corresponds to 50-81; that stretch reads GCNVELHKFLGHLRRPWGIVVGFLCQFGIMPL. The chain crosses the membrane as a helical span at residues 82–102; the sequence is TGFVLSVAFGILPVQAVVVLI. Residues 103–126 lie on the Extracellular side of the membrane; the sequence is QGCCPGGTASNILAYWVDGDMDLS. The chain crosses the membrane as a helical span at residues 127–147; that stretch reads VSMTTCSTLLALGMMPLCLFI. The Cytoplasmic segment spans residues 148–157; that stretch reads YTKMWVDSGT. A helical transmembrane segment spans residues 158–178; the sequence is IVIPYDSIGTSLVALVIPVSI. Topologically, residues 179 to 195 are extracellular; sequence GMYVNHKWPQKAKIILK. A helical transmembrane segment spans residues 196-216; sequence IGSIAGAILIVLIAVVGGILY. Topologically, residues 217–224 are cytoplasmic; it reads QSAWTIEP. Residues 225-245 form a helical membrane-spanning segment; it reads KLWIIGTIYPIAGYGLGFFLA. Over 246–284 the chain is Extracellular; sequence RIAGQPWYRCRTVALETGLQNTQLCSTIVQLSFSPEDLN. Residues 285–305 form a helical membrane-spanning segment; it reads LVFTFPLIYSIFQIAFAAILL. Residues 306-348 lie on the Cytoplasmic side of the membrane; the sequence is GAYVAYKKCHGKNNTELQEKTDNEMEPRSSFQETNKGFQPDEK. The segment covering 322-332 has biased composition (basic and acidic residues); the sequence is LQEKTDNEMEP. Residues 322 to 348 are disordered; it reads LQEKTDNEMEPRSSFQETNKGFQPDEK. Serine 335 carries the phosphoserine modification.

The protein belongs to the bile acid:sodium symporter (BASS) (TC 2.A.28) family. In terms of assembly, monomer and homodimer. Mainly expressed in ileum and kidney, lower expression in jejunum.

It is found in the membrane. The catalysed reaction is taurocholate(out) + 2 Na(+)(out) = taurocholate(in) + 2 Na(+)(in). The enzyme catalyses cholate(out) + 2 Na(+)(out) = cholate(in) + 2 Na(+)(in). It carries out the reaction taurochenodeoxycholate(out) + 2 Na(+)(out) = taurochenodeoxycholate(in) + 2 Na(+)(in). It catalyses the reaction tauroursodeoxycholate(out) + 2 Na(+)(out) = tauroursodeoxycholate(in) + 2 Na(+)(in). The catalysed reaction is glycocholate(out) + 2 Na(+)(out) = glycocholate(in) + 2 Na(+)(in). The enzyme catalyses tauronorcholate(out) + 2 Na(+)(out) = tauronorcholate(in) + 2 Na(+)(in). It carries out the reaction tauroallocholate(out) + 2 Na(+)(out) = tauroallocholate(in) + 2 Na(+)(in). It catalyses the reaction taurodeoxycholate(out) + 2 Na(+)(out) = taurodeoxycholate(in) + 2 Na(+)(in). The catalysed reaction is tauro-beta-muricholate(out) + 2 Na(+)(out) = tauro-beta-muricholate(in) + 2 Na(+)(in). Plays a critical role in the sodium-dependent reabsorption of bile acids from the lumen of the small intestine. Transports various bile acids, unconjugated or conjugated, such as cholate and taurocholate. Also responsible for bile acid transport in the renal proximal tubules, a salvage mechanism that helps conserve bile acids. Works collaboratively with the Na(+)-taurocholate cotransporting polypeptide (NTCP), the organic solute transporter (OST), and the bile salt export pump (BSEP), to ensure efficacious biological recycling of bile acids during enterohepatic circulation. The chain is Ileal sodium/bile acid cotransporter (SLC10A2) from Cricetulus griseus (Chinese hamster).